The sequence spans 267 residues: 1-(5-phosphoribosyl)-5-[(5-phosphoribosylamino)methylideneamino] imidazole-4-carboxamide isomerase (267 aa).

The protein belongs to the HisA/HisF family.

Its subcellular location is the cytoplasm. It carries out the reaction 1-(5-phospho-beta-D-ribosyl)-5-[(5-phospho-beta-D-ribosylamino)methylideneamino]imidazole-4-carboxamide = 5-[(5-phospho-1-deoxy-D-ribulos-1-ylimino)methylamino]-1-(5-phospho-beta-D-ribosyl)imidazole-4-carboxamide. Its pathway is amino-acid biosynthesis; L-histidine biosynthesis; L-histidine from 5-phospho-alpha-D-ribose 1-diphosphate: step 4/9. The polypeptide is 1-(5-phosphoribosyl)-5-[(5-phosphoribosylamino)methylideneamino] imidazole-4-carboxamide isomerase (HIS6) (Kluyveromyces lactis (strain ATCC 8585 / CBS 2359 / DSM 70799 / NBRC 1267 / NRRL Y-1140 / WM37) (Yeast)).